The following is a 547-amino-acid chain: Glucose-6-phosphate isomerase (547 aa).

Glu-351 (proton donor) is an active-site residue. Catalysis depends on residues His-382 and Lys-510.

Belongs to the GPI family.

The protein localises to the cytoplasm. It catalyses the reaction alpha-D-glucose 6-phosphate = beta-D-fructose 6-phosphate. Its pathway is carbohydrate biosynthesis; gluconeogenesis. The protein operates within carbohydrate degradation; glycolysis; D-glyceraldehyde 3-phosphate and glycerone phosphate from D-glucose: step 2/4. Functionally, catalyzes the reversible isomerization of glucose-6-phosphate to fructose-6-phosphate. The chain is Glucose-6-phosphate isomerase from Beijerinckia indica subsp. indica (strain ATCC 9039 / DSM 1715 / NCIMB 8712).